Reading from the N-terminus, the 198-residue chain is Ribosomal RNA small subunit methyltransferase G (198 aa).

Residues Gly-74, Phe-79, 123-124 (IQ), and Arg-136 contribute to the S-adenosyl-L-methionine site.

Belongs to the methyltransferase superfamily. RNA methyltransferase RsmG family.

Its subcellular location is the cytoplasm. It catalyses the reaction guanosine(527) in 16S rRNA + S-adenosyl-L-methionine = N(7)-methylguanosine(527) in 16S rRNA + S-adenosyl-L-homocysteine. In terms of biological role, specifically methylates the N7 position of guanine in position 527 of 16S rRNA. The polypeptide is Ribosomal RNA small subunit methyltransferase G (Orientia tsutsugamushi (strain Boryong) (Rickettsia tsutsugamushi)).